A 156-amino-acid polypeptide reads, in one-letter code: Transcription elongation factor GreA (156 aa).

This sequence belongs to the GreA/GreB family.

Necessary for efficient RNA polymerase transcription elongation past template-encoded arresting sites. The arresting sites in DNA have the property of trapping a certain fraction of elongating RNA polymerases that pass through, resulting in locked ternary complexes. Cleavage of the nascent transcript by cleavage factors such as GreA or GreB allows the resumption of elongation from the new 3'terminus. GreA releases sequences of 2 to 3 nucleotides. In Thermomicrobium roseum (strain ATCC 27502 / DSM 5159 / P-2), this protein is Transcription elongation factor GreA.